Here is a 102-residue protein sequence, read N- to C-terminus: Co-chaperonin GroES (102 aa).

Belongs to the GroES chaperonin family. In terms of assembly, heptamer of 7 subunits arranged in a ring. Interacts with the chaperonin GroEL.

Its subcellular location is the cytoplasm. Together with the chaperonin GroEL, plays an essential role in assisting protein folding. The GroEL-GroES system forms a nano-cage that allows encapsulation of the non-native substrate proteins and provides a physical environment optimized to promote and accelerate protein folding. GroES binds to the apical surface of the GroEL ring, thereby capping the opening of the GroEL channel. This Chlamydia muridarum (strain MoPn / Nigg) protein is Co-chaperonin GroES.